A 156-amino-acid polypeptide reads, in one-letter code: Calmodulin (156 aa).

Ser2 is subject to N-acetylserine. EF-hand domains lie at Glu15–Asn50, Pro51–Asp86, Asp88–Lys123, and Leu124–Lys156. Ca(2+)-binding residues include Asp28, Asp30, Asp32, Thr34, Glu39, Asp64, Asp66, Asn68, Thr70, Glu75, Asp101, Asp103, Asn105, and Glu112. Lys123 is subject to N6,N6,N6-trimethyllysine. Residues Asp137, Asp139, Asp141, Gln143, and Glu148 each contribute to the Ca(2+) site.

It belongs to the calmodulin family.

Its function is as follows. Calmodulin mediates the control of a large number of enzymes, ion channels and other proteins by Ca(2+). Among the enzymes to be stimulated by the calmodulin-Ca(2+) complex are a number of protein kinases and phosphatases. The polypeptide is Calmodulin (Strongylocentrotus intermedius (Sea urchin)).